The following is a 718-amino-acid chain: Ophiobolin F synthase oblA (718 aa).

The tract at residues 1–320 (MACKYSTLID…RYNGPTKFNE (320 aa)) is (7Z)-ophiobola-7,19-dien-3-ol synthase. Mg(2+)-binding residues include Asp93 and Asp97. Asp93 is a binding site for substrate. The short motif at 93-97 (DDVID) is the DDXXD 1 element. Substrate is bound by residues 180–183 (RALD), Asn224, 228–232 (SFEKE), and 311–312 (RY). The NSE/DTE motif lies at 224 to 232 (NDLFSFEKE). Residues 321 to 718 (LQLLRSEHGL…LRVMLELLKV (398 aa)) form a geranylfarnesyl diphosphate synthase region. Residues 346-391 (LVEGDCHESKPNELKRKRNGVSVDDEMRTNGTNGAKKPAHVSQPST) are disordered. Basic and acidic residues predominate over residues 349–359 (GDCHESKPNEL). 3 residues coordinate isopentenyl diphosphate: Lys429, Arg432, and His461. Residues Asp468 and Asp472 each coordinate Mg(2+). The short motif at 468 to 472 (DDLED) is the DDXXD 2 element. Position 477 (Arg477) interacts with dimethylallyl diphosphate. Position 478 (Arg478) interacts with isopentenyl diphosphate. Lys555, Thr556, Gln594, Asn601, Lys611, and Lys621 together coordinate dimethylallyl diphosphate.

The protein in the N-terminal section; belongs to the terpene synthase family. In the C-terminal section; belongs to the FPP/GGPP synthase family. Mg(2+) is required as a cofactor.

The catalysed reaction is isopentenyl diphosphate + (2E,6E)-farnesyl diphosphate = (2E,6E,10E)-geranylgeranyl diphosphate + diphosphate. It carries out the reaction isopentenyl diphosphate + (2E,6E,10E)-geranylgeranyl diphosphate = (2E,6E,10E,14E)-geranylfarnesyl diphosphate + diphosphate. The enzyme catalyses (2E,6E,10E,14E)-geranylfarnesyl diphosphate + H2O = ophiobolin F + diphosphate. It participates in secondary metabolite biosynthesis; terpenoid biosynthesis. Bifunctional sesterterpene synthase; part of the gene cluster that mediates the biosynthesis of the sesterterpenes ophiobolins, fungal phytotoxins with potential anti-cancer activities. The first step of the pathway is performed by the sesterterpene synthase oblA that possesses both prenyl transferase and terpene cyclase activity, converting isopentenyl diphosphate and dimethylallyl diphosphate into geranylfarnesyl diphosphate (GFPP) and further converting GFPP into ophiobolin F, respectively. Other sesterterpenoids (C(25) terpenoids) are found as minor products of oblA. It is expected that ophiobolin F is then oxidized to ophiobolin A via ophiobolin C and ophiobolin B intermediates by the combined action of the cytochrome P450 monooxygenase oblB and the FAD-dependent oxidoreductase oblC. Although oblB catalyzes multistep oxygenations at C5 and C21/C7 in a relatively efficient manner, it is unable to convert ophiobolin F to ophiobolin C and produces instead several unexpected derivatives. This Aspergillus clavatus (strain ATCC 1007 / CBS 513.65 / DSM 816 / NCTC 3887 / NRRL 1 / QM 1276 / 107) protein is Ophiobolin F synthase oblA.